The following is a 1335-amino-acid chain: Aldehyde oxidase 3 (1335 aa).

The region spanning 8–95 (DELIFFVNGK…GAAVTTVEGI (88 aa)) is the 2Fe-2S ferredoxin-type domain. [2Fe-2S] cluster is bound by residues cysteine 47, cysteine 52, cysteine 55, and cysteine 77. Glutamine 116 contacts Mo-molybdopterin. Residues cysteine 117, cysteine 120, cysteine 152, and cysteine 154 each contribute to the [2Fe-2S] cluster site. Residues 236 to 421 (FRGERTTWIA…ISVFVPRSSK (186 aa)) form the FAD-binding PCMH-type domain. 264–271 (LVIGNTYL) contacts FAD. Position 320 is a phosphoserine (serine 320). Residues serine 354, histidine 358, aspartate 367, and leucine 411 each contribute to the FAD site. Residues alanine 802, leucine 1043, and glutamine 1199 each contribute to the Mo-molybdopterin site. Catalysis depends on glutamate 1266, which acts as the Proton acceptor; for azaheterocycle hydroxylase activity.

It belongs to the xanthine dehydrogenase family. Homodimer. [2Fe-2S] cluster serves as cofactor. It depends on FAD as a cofactor. Requires Mo-molybdopterin as cofactor. As to expression, highly expressed in liver (at protein level). In liver, the expression is greater in males than females.

The protein resides in the cytoplasm. The enzyme catalyses an aldehyde + O2 + H2O = a carboxylate + H2O2 + H(+). Inhibited by potassium cyanide, menadione, benzamidine, raloxifene and norharmane. Its function is as follows. Oxidase with broad substrate specificity, oxidizing aromatic azaheterocycles, such as N1-methylnicotinamide and phthalazine, as well as aldehydes, such as benzaldehyde, retinal and pyridoxal. Plays a key role in the metabolism of xenobiotics and drugs containing aromatic azaheterocyclic substituents. Is probably involved in the regulation of reactive oxygen species homeostasis. May be a prominent source of superoxide generation via the one-electron reduction of molecular oxygen. May also catalyze nitric oxide (NO) production via the reduction of nitrite to NO with NADH or aldehyde as electron donor. This is Aldehyde oxidase 3 (Aox3) from Mus musculus (Mouse).